A 493-amino-acid chain; its full sequence is Probable GTP-binding protein OBGM, mitochondrial (493 aa).

The transit peptide at 1–28 (MWLIRAIVPVRYLGSYKRPQKPPWMRNP) directs the protein to the mitochondrion. One can recognise an Obg domain in the interval 48 to 303 (TRMRDRFTLY…AVLILELKSI (256 aa)). Disordered regions lie at residues 65-89 (SGCS…GGRG) and 146-215 (GEIP…EDDD). Positions 187–196 (SESDQDDTEQ) are enriched in acidic residues. Residues 304-476 (ADVGLVGMPN…LKDGLKMLVD (173 aa)) form the OBG-type G domain. GTP is bound by residues 310 to 317 (GMPNAGKS) and 356 to 360 (DIPGL).

Belongs to the TRAFAC class OBG-HflX-like GTPase superfamily. OBG GTPase family.

It is found in the mitochondrion. May bind GTP and have GTPase activity. The sequence is that of Probable GTP-binding protein OBGM, mitochondrial (ATOBGM) from Arabidopsis thaliana (Mouse-ear cress).